A 270-amino-acid chain; its full sequence is Dehydrodolichyl diphosphate synthase (270 aa).

The protein belongs to the UPP synthase family.

The protein localises to the endoplasmic reticulum membrane. It participates in protein modification; protein glycosylation. Its function is as follows. Cis-prenyl transferase that adds multiple copies of isopentenyl pyrophosphate (IPP) to farnesyl pyrophosphate (FPP) to produce dehydrodolichyl diphosphate (Dedol-PP). This chain is Dehydrodolichyl diphosphate synthase (RER2), found in Encephalitozoon cuniculi (strain GB-M1) (Microsporidian parasite).